Reading from the N-terminus, the 393-residue chain is Acetyl-CoA acetyltransferase (393 aa).

The active-site Acyl-thioester intermediate is the Cys88. Residues His349 and Cys379 each act as proton acceptor in the active site.

It belongs to the thiolase-like superfamily. Thiolase family.

It is found in the cytoplasm. It catalyses the reaction 2 acetyl-CoA = acetoacetyl-CoA + CoA. The protein operates within metabolic intermediate biosynthesis; (R)-mevalonate biosynthesis; (R)-mevalonate from acetyl-CoA: step 1/3. The chain is Acetyl-CoA acetyltransferase (atoB) from Pseudomonas aeruginosa (strain ATCC 15692 / DSM 22644 / CIP 104116 / JCM 14847 / LMG 12228 / 1C / PRS 101 / PAO1).